Consider the following 333-residue polypeptide: CMP-N-acetylneuraminate-beta-galactosamide-alpha-2,3-sialyltransferase 4 (333 aa).

The Cytoplasmic segment spans residues 1 to 8 (MVSKSRWK). Residues 9–26 (LLAMLALVLVVMVWYSIS) form a helical; Signal-anchor for type II membrane protein membrane-spanning segment. Over 27 to 333 (REDRYIELFY…MGAIKNLTSF (307 aa)) the chain is Lumenal. 4 N-linked (GlcNAc...) asparagine glycosylation sites follow: asparagine 61, asparagine 131, asparagine 310, and asparagine 329. Cysteine 120 and cysteine 273 are oxidised to a cystine.

Belongs to the glycosyltransferase 29 family. Post-translationally, the soluble form derives from the membrane form by proteolytic processing. Highly expressed in adult placenta, heart and kidney.

It is found in the golgi apparatus. The protein localises to the golgi stack membrane. Its subcellular location is the secreted. It catalyses the reaction a beta-D-galactosyl-(1-&gt;3)-N-acetyl-beta-D-galactosaminyl derivative + CMP-N-acetyl-beta-neuraminate = an N-acetyl-alpha-neuraminyl-(2-&gt;3)-beta-D-galactosyl-(1-&gt;3)-N-acetyl-beta-D-galactosaminyl derivative + CMP + H(+). The catalysed reaction is a beta-D-galactosyl-(1-&gt;3)-N-acetyl-alpha-D-galactosaminyl derivative + CMP-N-acetyl-beta-neuraminate = an N-acetyl-alpha-neuraminyl-(2-&gt;3)-beta-D-galactosyl-(1-&gt;3)-N-acetyl-alpha-D-galactosaminyl derivative + CMP + H(+). It carries out the reaction a beta-D-galactosyl-(1-&gt;4)-N-acetyl-beta-D-glucosaminyl derivative + CMP-N-acetyl-beta-neuraminate = an N-acetyl-alpha-neuraminyl-(2-&gt;3)-beta-D-galactosyl-(1-&gt;4)-N-acetyl-beta-D-glucosaminyl derivative + CMP + H(+). The enzyme catalyses a ganglioside GM1 (d18:1(4E)) + CMP-N-acetyl-beta-neuraminate = a ganglioside GD1a (d18:1(4E)) + CMP + H(+). It catalyses the reaction a ganglioside GA1 (d18:1(4E)) + CMP-N-acetyl-beta-neuraminate = a ganglioside GM1b (d18:1(4E)) + CMP + H(+). The catalysed reaction is a ganglioside GT1c (d18:1(4E)) + CMP-N-acetyl-beta-neuraminate = a ganglioside GQ1c (d18:1(4E)) + CMP + H(+). It carries out the reaction a neolactoside nLc4Cer + CMP-N-acetyl-beta-neuraminate = a neolactoside IV(3)-alpha-NeuAc-nLc4Cer + CMP + H(+). The enzyme catalyses a neolactoside nLc4Cer(d18:1(4E)) + CMP-N-acetyl-beta-neuraminate = a neolactoside IV(3)-alpha-NeuAc-nLc4Cer(d18:1(4E)) + CMP + H(+). Its pathway is protein modification; protein glycosylation. It participates in glycolipid biosynthesis. A beta-galactoside alpha2-3 sialyltransferase involved in terminal sialylation of glycoproteins and glycolipids. Catalyzes the transfer of sialic acid (N-acetyl-neuraminic acid; Neu5Ac) from the nucleotide sugar donor CMP-Neu5Ac onto acceptor Galbeta-(1-&gt;3)-GalNAc- and Galbeta-(1-&gt;4)-GlcNAc-terminated glycoconjugates through an alpha2-3 linkage. Plays a major role in hemostasis. Responsible for sialylation of plasma VWF/von Willebrand factor, preventing its recognition by asialoglycoprotein receptors (ASGPR) and subsequent clearance. Regulates ASGPR-mediated clearance of platelets. Participates in the biosynthesis of the sialyl Lewis X epitopes, both on O- and N-glycans, which are recognized by SELE/E-selectin, SELP/P-selectin and SELL/L-selectin. Essential for selectin-mediated rolling and adhesion of leukocytes during extravasation. Contributes to adhesion and transendothelial migration of neutrophils likely through terminal sialylation of CXCR2. In glycosphingolipid biosynthesis, sialylates GM1 and GA1 gangliosides to form GD1a and GM1b, respectively. Metabolizes brain c-series ganglioside GT1c forming GQ1c. Synthesizes ganglioside LM1 (IV3Neu5Ac-nLc4Cer), a major structural component of peripheral nerve myelin. In Homo sapiens (Human), this protein is CMP-N-acetylneuraminate-beta-galactosamide-alpha-2,3-sialyltransferase 4 (ST3GAL4).